We begin with the raw amino-acid sequence, 126 residues long: Fluoride-specific ion channel FluC 1 (126 aa).

The next 4 membrane-spanning stretches (helical) occupy residues 5–25 (FILA…LVGI), 39–59 (TLFI…LFAI), 69–89 (IFLI…SLDS), and 100–120 (AAGA…IAGI). Na(+)-binding residues include G77 and T80.

The protein belongs to the fluoride channel Fluc/FEX (TC 1.A.43) family.

Its subcellular location is the cell inner membrane. It carries out the reaction fluoride(in) = fluoride(out). With respect to regulation, na(+) is not transported, but it plays an essential structural role and its presence is essential for fluoride channel function. Functionally, fluoride-specific ion channel. Important for reducing fluoride concentration in the cell, thus reducing its toxicity. In Nitrobacter hamburgensis (strain DSM 10229 / NCIMB 13809 / X14), this protein is Fluoride-specific ion channel FluC 1.